The primary structure comprises 338 residues: Clathrin light chain 1 (338 aa).

The segment at 1–111 (MATFDDGDFP…NEMREEGFQR (111 aa)) is disordered. Composition is skewed to polar residues over residues 29 to 47 (SEAQ…SSFN) and 61 to 73 (SSPN…PFES). Residues 102 to 111 (NEMREEGFQR) show a composition bias toward basic and acidic residues. Residues 102-163 (NEMREEGFQR…TIETNKTDNR (62 aa)) form an involved in binding clathrin heavy chain region. Residues 122 to 142 (LEEKEKKEKEMRNQIITEAED) adopt a coiled-coil conformation. The tract at residues 192–338 (IPREVPNIEK…VTEAEGTKAE (147 aa)) is disordered. The span at 197–212 (PNIEKKRGKKDPDKKP) shows a compositional bias: basic and acidic residues. A compositionally biased stretch (pro residues) spans 241-253 (NPPPHMMPPPPPA). Residues 254-304 (KDAKDGKDAKDGKDAKTGKDGKDAKGGKDAKDLKDGKPADPKVTEEKRPSP) show a composition bias toward basic and acidic residues.

Belongs to the clathrin light chain family. Clathrin coats are formed from molecules containing 3 heavy chains and 3 light chains.

The protein resides in the cytoplasmic vesicle membrane. It is found in the membrane. Its subcellular location is the coated pit. Its function is as follows. Clathrin is the major protein of the polyhedral coat of coated pits and vesicles. In Arabidopsis thaliana (Mouse-ear cress), this protein is Clathrin light chain 1.